Here is a 356-residue protein sequence, read N- to C-terminus: Peptide chain release factor 1 (356 aa).

Gln234 carries the N5-methylglutamine modification.

The protein belongs to the prokaryotic/mitochondrial release factor family. Methylated by PrmC. Methylation increases the termination efficiency of RF1.

It localises to the cytoplasm. Functionally, peptide chain release factor 1 directs the termination of translation in response to the peptide chain termination codons UAG and UAA. The polypeptide is Peptide chain release factor 1 (Parafrankia sp. (strain EAN1pec)).